The chain runs to 333 residues: Polygalacturonase inhibitor (333 aa).

An N-terminal signal peptide occupies residues 1-27 (METSKLFLLSSSLLLVLLATRPCPSLS). Intrachain disulfides connect C30–C60 and C61–C68. LRR repeat units follow at residues 72 to 96 (THRI…VGDL), 97 to 120 (PFLE…AIAK), 121 to 144 (LKHL…FFSE), 145 to 169 (LKNL…LSLL), 170 to 192 (PNLG…SFGK), 194 to 220 (AGST…GFDP), 221 to 240 (NVMD…FFNA), 241 to 263 (NKST…RVEF), 264 to 288 (PKSL…MTSL), and 290 to 312 (LQFL…KLQS). N-linked (GlcNAc...) asparagine glycans are attached at residues N109, N133, N147, and N157. Residue N241 is glycosylated (N-linked (GlcNAc...) asparagine). N294 carries an N-linked (GlcNAc...) asparagine glycan. 2 cysteine pairs are disulfide-bonded: C301-C323 and C325-C332.

This sequence belongs to the polygalacturonase-inhibiting protein family.

Its subcellular location is the secreted. It localises to the cell wall. The protein resides in the membrane. Its function is as follows. Inhibitor of fungal polygalacturonase. It is an important factor for plant resistance to phytopathogenic fungi. This chain is Polygalacturonase inhibitor (pgip), found in Vitis vinifera (Grape).